We begin with the raw amino-acid sequence, 147 residues long: Transthyretin (147 aa).

Residues 1-20 form the signal peptide; it reads MASFRLLLLCLAGLVFVSEA. A Sulfocysteine modification is found at Cys30. Lys35 is an L-thyroxine binding site. Glu62 is subject to 4-carboxyglutamate. Ser72 is modified (phosphoserine). Residue Glu74 participates in L-thyroxine binding. N-linked (GlcNAc...) asparagine glycosylation occurs at Asn118. L-thyroxine is bound at residue Ser137.

It belongs to the transthyretin family. As to quaternary structure, homotetramer. Dimer of dimers. In the homotetramer, subunits assemble around a central channel that can accommodate two ligand molecules. Interacts with RBP4. Post-translationally, sulfonation of the reactive cysteine Cys-30 enhances the stability of the native conformation of TTR, avoiding misassembly of the protein leading to amyloid formation. In terms of tissue distribution, highly expressed in the choroid plexus.

Its subcellular location is the secreted. Its function is as follows. Thyroid hormone-binding protein. Probably transports thyroxine from the bloodstream to the brain. In Ovis aries (Sheep), this protein is Transthyretin (TTR).